A 254-amino-acid polypeptide reads, in one-letter code: Chaperone protein PmfD (254 aa).

The signal sequence occupies residues 1–26 (MNSFSTLKTLFCGSLLALSLVNTTQA).

The protein belongs to the periplasmic pilus chaperone family.

It is found in the periplasm. In terms of biological role, involved in the biogenesis of the PMF fimbria. The sequence is that of Chaperone protein PmfD (pmfD) from Proteus mirabilis (strain HI4320).